A 563-amino-acid chain; its full sequence is Dihydroxy-acid dehydratase (563 aa).

Cysteine 50 serves as a coordination point for [2Fe-2S] cluster. Residue aspartate 82 participates in Mg(2+) binding. Residue cysteine 123 participates in [2Fe-2S] cluster binding. Mg(2+)-binding residues include aspartate 124 and lysine 125. At lysine 125 the chain carries N6-carboxylysine. Cysteine 195 contributes to the [2Fe-2S] cluster binding site. Mg(2+) is bound at residue glutamate 447. The active-site Proton acceptor is the serine 473.

This sequence belongs to the IlvD/Edd family. Homodimer. The cofactor is [2Fe-2S] cluster. It depends on Mg(2+) as a cofactor.

It catalyses the reaction (2R)-2,3-dihydroxy-3-methylbutanoate = 3-methyl-2-oxobutanoate + H2O. The enzyme catalyses (2R,3R)-2,3-dihydroxy-3-methylpentanoate = (S)-3-methyl-2-oxopentanoate + H2O. It functions in the pathway amino-acid biosynthesis; L-isoleucine biosynthesis; L-isoleucine from 2-oxobutanoate: step 3/4. It participates in amino-acid biosynthesis; L-valine biosynthesis; L-valine from pyruvate: step 3/4. Functionally, functions in the biosynthesis of branched-chain amino acids. Catalyzes the dehydration of (2R,3R)-2,3-dihydroxy-3-methylpentanoate (2,3-dihydroxy-3-methylvalerate) into 2-oxo-3-methylpentanoate (2-oxo-3-methylvalerate) and of (2R)-2,3-dihydroxy-3-methylbutanoate (2,3-dihydroxyisovalerate) into 2-oxo-3-methylbutanoate (2-oxoisovalerate), the penultimate precursor to L-isoleucine and L-valine, respectively. In Nostoc sp. (strain PCC 7120 / SAG 25.82 / UTEX 2576), this protein is Dihydroxy-acid dehydratase.